The following is a 236-amino-acid chain: Small ribosomal subunit protein eS6 (236 aa).

Residues Ser-232 and Ser-233 each carry the phosphoserine modification.

This sequence belongs to the eukaryotic ribosomal protein eS6 family. Post-translationally, phosphorylated.

The polypeptide is Small ribosomal subunit protein eS6 (RPS6A) (Candida glabrata (strain ATCC 2001 / BCRC 20586 / JCM 3761 / NBRC 0622 / NRRL Y-65 / CBS 138) (Yeast)).